A 279-amino-acid chain; its full sequence is Protease HtpX homolog (279 aa).

2 helical membrane-spanning segments follow: residues 4 to 24 (IFLF…VLAV) and 34 to 54 (GSLL…SLLM). Residue His140 participates in Zn(2+) binding. The active site involves Glu141. Zn(2+) is bound at residue His144. 2 helical membrane passes run 155 to 175 (LIQG…ANLI) and 189 to 209 (FLVS…IVMW). Glu215 serves as a coordination point for Zn(2+).

The protein belongs to the peptidase M48B family. Requires Zn(2+) as cofactor.

The protein resides in the cell inner membrane. This Neisseria meningitidis serogroup B (strain ATCC BAA-335 / MC58) protein is Protease HtpX homolog.